A 344-amino-acid polypeptide reads, in one-letter code: Protein pelota homolog (344 aa).

Belongs to the eukaryotic release factor 1 family. Pelota subfamily. As to quaternary structure, monomer. The cofactor is a divalent metal cation.

The protein resides in the cytoplasm. May function in recognizing stalled ribosomes, interact with stem-loop structures in stalled mRNA molecules, and effect endonucleolytic cleavage of the mRNA. May play a role in the release non-functional ribosomes and degradation of damaged mRNAs. Has endoribonuclease activity. This Saccharolobus islandicus (strain Y.N.15.51 / Yellowstone #2) (Sulfolobus islandicus) protein is Protein pelota homolog.